The chain runs to 400 residues: Carbamoyl phosphate synthase small chain (400 aa).

The segment at 1 to 199 is CPSase; it reads MSNETNANST…PYVIEAEGEA (199 aa). S66, G250, and G252 together coordinate L-glutamine. Positions 200 to 395 constitute a Glutamine amidotransferase type-1 domain; that stretch reads RHTVVAYDLG…VALMDEDSEN (196 aa). The active-site Nucleophile is the C278. The L-glutamine site is built by F279, Q282, N320, G322, and F323. Catalysis depends on residues H368 and E370.

It belongs to the CarA family. In terms of assembly, composed of two chains; the small (or glutamine) chain promotes the hydrolysis of glutamine to ammonia, which is used by the large (or ammonia) chain to synthesize carbamoyl phosphate. Tetramer of heterodimers (alpha,beta)4.

The enzyme catalyses hydrogencarbonate + L-glutamine + 2 ATP + H2O = carbamoyl phosphate + L-glutamate + 2 ADP + phosphate + 2 H(+). It catalyses the reaction L-glutamine + H2O = L-glutamate + NH4(+). The protein operates within amino-acid biosynthesis; L-arginine biosynthesis; carbamoyl phosphate from bicarbonate: step 1/1. Its pathway is pyrimidine metabolism; UMP biosynthesis via de novo pathway; (S)-dihydroorotate from bicarbonate: step 1/3. Small subunit of the glutamine-dependent carbamoyl phosphate synthetase (CPSase). CPSase catalyzes the formation of carbamoyl phosphate from the ammonia moiety of glutamine, carbonate, and phosphate donated by ATP, constituting the first step of 2 biosynthetic pathways, one leading to arginine and/or urea and the other to pyrimidine nucleotides. The small subunit (glutamine amidotransferase) binds and cleaves glutamine to supply the large subunit with the substrate ammonia. This chain is Carbamoyl phosphate synthase small chain, found in Corynebacterium efficiens (strain DSM 44549 / YS-314 / AJ 12310 / JCM 11189 / NBRC 100395).